A 180-amino-acid polypeptide reads, in one-letter code: uncharacterized protein (180 aa).

Positions 3 to 33 form a coiled coil; it reads QQQSNNSNDNKEQLDRVIESLNRVNSETKQI.

This is an uncharacterized protein from Acanthamoeba polyphaga (Amoeba).